Reading from the N-terminus, the 172-residue chain is Macro domain-containing protein lp_3408 (172 aa).

In terms of domain architecture, Macro spans 1-171; it reads MVEIKVIHGD…VFSTALAALT (171 aa).

This sequence belongs to the MacroD-type family.

The chain is Macro domain-containing protein lp_3408 from Lactiplantibacillus plantarum (strain ATCC BAA-793 / NCIMB 8826 / WCFS1) (Lactobacillus plantarum).